The following is a 729-amino-acid chain: Fatty acid oxidation complex subunit alpha (729 aa).

The segment at 1–189 is enoyl-CoA hydratase/isomerase; that stretch reads MLYKGDTLYL…KIGLVDGVVK (189 aa). D296 contributes to the substrate binding site. Residues 311-729 are 3-hydroxyacyl-CoA dehydrogenase; sequence ETPKQAAVLG…ARPVGDLKTA (419 aa). NAD(+)-binding positions include M324, D343, 400–402, K407, and S429; that span reads VVE. H450 (for 3-hydroxyacyl-CoA dehydrogenase activity) is an active-site residue. Residue N453 participates in NAD(+) binding. Substrate is bound by residues N500 and Y660. Residues 708–729 form a disordered region; sequence RHNEPYYPPVEPARPVGDLKTA.

This sequence in the N-terminal section; belongs to the enoyl-CoA hydratase/isomerase family. It in the C-terminal section; belongs to the 3-hydroxyacyl-CoA dehydrogenase family. In terms of assembly, heterotetramer of two alpha chains (FadB) and two beta chains (FadA).

The enzyme catalyses a (3S)-3-hydroxyacyl-CoA + NAD(+) = a 3-oxoacyl-CoA + NADH + H(+). It catalyses the reaction a (3S)-3-hydroxyacyl-CoA = a (2E)-enoyl-CoA + H2O. The catalysed reaction is a 4-saturated-(3S)-3-hydroxyacyl-CoA = a (3E)-enoyl-CoA + H2O. It carries out the reaction (3S)-3-hydroxybutanoyl-CoA = (3R)-3-hydroxybutanoyl-CoA. The enzyme catalyses a (3Z)-enoyl-CoA = a 4-saturated (2E)-enoyl-CoA. It catalyses the reaction a (3E)-enoyl-CoA = a 4-saturated (2E)-enoyl-CoA. It participates in lipid metabolism; fatty acid beta-oxidation. In terms of biological role, involved in the aerobic and anaerobic degradation of long-chain fatty acids via beta-oxidation cycle. Catalyzes the formation of 3-oxoacyl-CoA from enoyl-CoA via L-3-hydroxyacyl-CoA. It can also use D-3-hydroxyacyl-CoA and cis-3-enoyl-CoA as substrate. This is Fatty acid oxidation complex subunit alpha from Escherichia coli O6:H1 (strain CFT073 / ATCC 700928 / UPEC).